The primary structure comprises 244 residues: DNA repair protein RecO (244 aa).

The protein belongs to the RecO family.

Involved in DNA repair and RecF pathway recombination. This is DNA repair protein RecO from Myxococcus xanthus (strain DK1622).